A 568-amino-acid chain; its full sequence is Lipoprotein LpqB (568 aa).

Residues 1–23 (MSKISTKLKALSAVLSVTTLVAG) form the signal peptide. A lipid anchor (N-palmitoyl cysteine) is attached at Cys-24. Cys-24 is lipidated: S-diacylglycerol cysteine.

This sequence belongs to the LpqB lipoprotein family.

The protein resides in the cell membrane. In Corynebacterium glutamicum (strain R), this protein is Lipoprotein LpqB.